The primary structure comprises 209 residues: Uracil phosphoribosyltransferase (209 aa).

5-phospho-alpha-D-ribose 1-diphosphate is bound by residues Arg79, Arg104, and 131 to 139 (DPMLATGNS). Uracil-binding positions include Ile194 and 199 to 201 (GDA). A 5-phospho-alpha-D-ribose 1-diphosphate-binding site is contributed by Asp200.

This sequence belongs to the UPRTase family. It depends on Mg(2+) as a cofactor.

It catalyses the reaction UMP + diphosphate = 5-phospho-alpha-D-ribose 1-diphosphate + uracil. Its pathway is pyrimidine metabolism; UMP biosynthesis via salvage pathway; UMP from uracil: step 1/1. Allosterically activated by GTP. Its function is as follows. Catalyzes the conversion of uracil and 5-phospho-alpha-D-ribose 1-diphosphate (PRPP) to UMP and diphosphate. This chain is Uracil phosphoribosyltransferase, found in Rhizobium rhizogenes (strain K84 / ATCC BAA-868) (Agrobacterium radiobacter).